A 209-amino-acid chain; its full sequence is Molybdenum cofactor guanylyltransferase (209 aa).

GTP is bound by residues Leu-13–Gly-15, Lys-26, Asn-54, Asp-74, and Asp-104. Asp-104 serves as a coordination point for Mg(2+).

This sequence belongs to the MobA family. Monomer. It depends on Mg(2+) as a cofactor.

It is found in the cytoplasm. It carries out the reaction Mo-molybdopterin + GTP + H(+) = Mo-molybdopterin guanine dinucleotide + diphosphate. In terms of biological role, transfers a GMP moiety from GTP to Mo-molybdopterin (Mo-MPT) cofactor (Moco or molybdenum cofactor) to form Mo-molybdopterin guanine dinucleotide (Mo-MGD) cofactor. This is Molybdenum cofactor guanylyltransferase from Acinetobacter baumannii (strain ATCC 17978 / DSM 105126 / CIP 53.77 / LMG 1025 / NCDC KC755 / 5377).